We begin with the raw amino-acid sequence, 89 residues long: Acylphosphatase (89 aa).

One can recognise an Acylphosphatase-like domain in the interval 3–89 (RFTARVAGLV…QSDLTDFRRK (87 aa)). Active-site residues include Arg-18 and Asn-36.

The protein belongs to the acylphosphatase family.

It catalyses the reaction an acyl phosphate + H2O = a carboxylate + phosphate + H(+). The sequence is that of Acylphosphatase (acyP) from Frankia casuarinae (strain DSM 45818 / CECT 9043 / HFP020203 / CcI3).